The sequence spans 179 residues: Transcription factor 21 (179 aa).

The tract at residues 23-87 (IKLDPNKEFG…QVQRNAANAR (65 aa)) is disordered. Polar residues predominate over residues 34 to 46 (SNDSNEESSTCDN). The span at 50 to 64 (KKGRGTSGKRRKAPS) shows a compositional bias: basic residues. Residues 70–80 (GNINQEGKQVQ) show a composition bias toward polar residues. Residues 79–131 (VQRNAANARERARMRVLSKAFSRLKTTLPWVPPDTKLSKLDTLRLASSYIAHL) enclose the bHLH domain.

Efficient DNA binding requires dimerization with another bHLH protein.

The protein resides in the nucleus. Its function is as follows. Involved in epithelial-mesenchymal interactions in kidney and lung morphogenesis that include epithelial differentiation and branching morphogenesis. The polypeptide is Transcription factor 21 (tcf21) (Xenopus tropicalis (Western clawed frog)).